A 288-amino-acid polypeptide reads, in one-letter code: MDKLNAISIFCKVIETQSFTLAAKQQNISVAMASKLVSQLEEHLKTRLLQRTTRKIMPTEAGMMYYQRCQGILLDLDEADSSITQLTSSLQGNLLISVPRDFGLLFIAPNLPTFMAKHPHLHIEVEFNDKKIDLLSEGYDLALRIGYMEDSSLVSRKIGTTTVHFAASPNYLETNGIPQTPDDLEHHNGLLYKNAMNQVNWVGSRINQTQRFKIQSKVVSNSGFALLNMAKAGLGIANLPKFILGRAFEKGELIEILPEYKQQKLEIHVVYPNRRHLPIKVTGISLNF.

The HTH lysR-type domain occupies 1 to 59 (MDKLNAISIFCKVIETQSFTLAAKQQNISVAMASKLVSQLEEHLKTRLLQRTTRKIMPT). The H-T-H motif DNA-binding region spans 19–38 (FTLAAKQQNISVAMASKLVS).

The protein belongs to the LysR transcriptional regulatory family.

This is an uncharacterized protein from Haemophilus influenzae (strain ATCC 51907 / DSM 11121 / KW20 / Rd).